A 475-amino-acid polypeptide reads, in one-letter code: Secreted triacylglycerol lipase LIP5 (475 aa).

Residues 1 to 19 (MYPCTLLMVLLCLAIMTHG) form the signal peptide. C129 and C300 are oxidised to a cystine. Catalysis depends on S213, which acts as the Nucleophile. 2 N-linked (GlcNAc...) asparagine glycosylation sites follow: N246 and N312. The active site involves D360. Residue N369 is glycosylated (N-linked (GlcNAc...) asparagine). H394 is a catalytic residue. A glycan (N-linked (GlcNAc...) asparagine) is linked at N471.

It belongs to the AB hydrolase superfamily. Lipase family. Class Lip subfamily.

The enzyme catalyses a triacylglycerol + H2O = a diacylglycerol + a fatty acid + H(+). The catalysed reaction is a monoacylglycerol + H2O = glycerol + a fatty acid + H(+). It carries out the reaction a diacylglycerol + H2O = a monoacylglycerol + a fatty acid + H(+). In terms of biological role, secreted lipase involved in Dandruff and seborrheic dermatitis (D/SD) probably via lipase-mediated breakdown of sebaceous lipids and release of irritating free fatty acids. Has triacylglycerol lipase activity and is able to hydrolyze triolein. Mostly converts monoolein to di- and triolein, while free fatty acids are only produced in low amounts. This chain is Secreted triacylglycerol lipase LIP5, found in Malassezia globosa (strain ATCC MYA-4612 / CBS 7966) (Dandruff-associated fungus).